The primary structure comprises 517 residues: Ribonuclease Y (517 aa).

A helical transmembrane segment spans residues 1-21; sequence MIEVLIGLGAGVVGVGAGYLY. The KH domain occupies 207-273; that stretch reads LINVVNIKND…TRVIELLVED (67 aa). The 94-residue stretch at 333 to 426 folds into the HD domain; it reads ALAHSLEVAH…VCAADALSAA (94 aa).

It belongs to the RNase Y family.

Its subcellular location is the cell membrane. Endoribonuclease that initiates mRNA decay. The sequence is that of Ribonuclease Y from Campylobacter concisus (strain 13826).